Consider the following 372-residue polypeptide: MGANTFGKLLAVTTFGESHGPAIGCVIDGCPPGLELAAEEFAHDLQRRATGRSRHTSARREADEVEILSGVYEGLTTGTPIALLIRNTDQRSKDYATIARQFRPGHADYTYWQKYGIRDPRGGGRSSARETTMRVAAAVVAKKWLQQRYGVTVRGFLSQLGEIRPEGFAWDAIEDNPFFWPHAAQVPALEAYMDALRKSGDSVGARVDVVAEGVPPGWGEPIYGKLDGELAAALMGINAVKGVEIGAGFGSAVQKGTEHRDLMTPLGFLSNHAGGIIGGIATGQPIIVSIALKPTSSLRLPGETVDVDGCAVQVITKGRHDPCVGIRAPPIAEAMVALVLMDQALRHRAQCGDVGEMSPCIPEGVGLRNADD.

NADP(+) is bound by residues Arg-48 and Arg-54. FMN contacts are provided by residues 125 to 127 (RSS), 238 to 239 (NA), Gly-278, 293 to 297 (KPTSS), and Arg-319.

It belongs to the chorismate synthase family. As to quaternary structure, homotetramer. It depends on FMNH2 as a cofactor.

The catalysed reaction is 5-O-(1-carboxyvinyl)-3-phosphoshikimate = chorismate + phosphate. It functions in the pathway metabolic intermediate biosynthesis; chorismate biosynthesis; chorismate from D-erythrose 4-phosphate and phosphoenolpyruvate: step 7/7. In terms of biological role, catalyzes the anti-1,4-elimination of the C-3 phosphate and the C-6 proR hydrogen from 5-enolpyruvylshikimate-3-phosphate (EPSP) to yield chorismate, which is the branch point compound that serves as the starting substrate for the three terminal pathways of aromatic amino acid biosynthesis. This reaction introduces a second double bond into the aromatic ring system. In Xylella fastidiosa (strain M23), this protein is Chorismate synthase.